A 181-amino-acid chain; its full sequence is Probable inactive acireductone dioxygenase 2 (181 aa).

The protein belongs to the acireductone dioxygenase (ARD) family.

Its subcellular location is the cytoplasm. It is found in the nucleus. In terms of biological role, probable inactive acireductone dioxygenase. The protein is Probable inactive acireductone dioxygenase 2 of Sorghum bicolor (Sorghum).